A 359-amino-acid chain; its full sequence is Putative mannose-1-phosphate guanyltransferase (359 aa).

The protein belongs to the transferase hexapeptide repeat family.

It catalyses the reaction alpha-D-mannose 1-phosphate + GTP + H(+) = GDP-alpha-D-mannose + diphosphate. This Sulfolobus acidocaldarius (strain ATCC 33909 / DSM 639 / JCM 8929 / NBRC 15157 / NCIMB 11770) protein is Putative mannose-1-phosphate guanyltransferase (mpg1).